The sequence spans 179 residues: Large ribosomal subunit protein uL5 (179 aa).

It belongs to the universal ribosomal protein uL5 family. As to quaternary structure, part of the 50S ribosomal subunit; part of the 5S rRNA/L5/L18/L25 subcomplex. Contacts the 5S rRNA and the P site tRNA. Forms a bridge to the 30S subunit in the 70S ribosome.

Its function is as follows. This is one of the proteins that bind and probably mediate the attachment of the 5S RNA into the large ribosomal subunit, where it forms part of the central protuberance. In the 70S ribosome it contacts protein S13 of the 30S subunit (bridge B1b), connecting the 2 subunits; this bridge is implicated in subunit movement. Contacts the P site tRNA; the 5S rRNA and some of its associated proteins might help stabilize positioning of ribosome-bound tRNAs. This Synechococcus sp. (strain RCC307) protein is Large ribosomal subunit protein uL5.